Reading from the N-terminus, the 68-residue chain is uncharacterized protein (68 aa).

The tract at residues 1–68 (METIIRRFSP…GNSKNIKTKK (68 aa)) is disordered. Over residues 9 to 34 (SPKEKEKEKEKEEKDEKSKDKKEPIK) the composition is skewed to basic and acidic residues. A compositionally biased stretch (acidic residues) spans 42 to 51 (DEEEEEDEQE).

This is an uncharacterized protein from Dictyostelium discoideum (Social amoeba).